Here is a 568-residue protein sequence, read N- to C-terminus: Delta 8-(E)-sphingolipid desaturase (568 aa).

The 76-residue stretch at 2–77 folds into the Cytochrome b5 heme-binding domain; that stretch reads DNIISRGEIE…FRKWRIGRID (76 aa). Positions 37 and 60 each coordinate heme. Transmembrane regions (helical) follow at residues 241 to 261 and 272 to 292; these read FWSA…AHDA and LDNI…LGWW. The Histidine box-1 motif lies at 259-263; it reads HDAGH. The short motif at 296–300 is the Histidine box-2 element; the sequence is HNVHH. 3 consecutive transmembrane segments (helical) span residues 352–377, 389–409, and 421–441; these read YLYY…LLGL, YFEL…LVGC, and IMVS…SHFA. Positions 480-484 match the Histidine box-3 motif; sequence QVVHH. Over residues 549-560 the composition is skewed to basic and acidic residues; it reads ATGEREADEKTY. Positions 549–568 are disordered; the sequence is ATGEREADEKTYRTKSIKNA.

It belongs to the fatty acid desaturase type 1 family.

It localises to the membrane. The catalysed reaction is an N-acylsphing-4-enine + 2 Fe(II)-[cytochrome b5] + O2 + 2 H(+) = a (4E,8E)-4-sphinga-4,8-dienine ceramide + 2 Fe(III)-[cytochrome b5] + 2 H2O. It participates in lipid metabolism; sphingolipid metabolism. Delta(8)-fatty-acid desaturase which introduces a double bond at the 8-position in the long-chain base (LCB) of ceramides. Required for the formation of the di-unsaturated sphingoid base (E,E)-sphinga-4,8-dienine during glucosylceramide (GluCer) biosynthesis. This is Delta 8-(E)-sphingolipid desaturase from Lachancea kluyveri (strain ATCC 58438 / CBS 3082 / BCRC 21498 / NBRC 1685 / JCM 7257 / NCYC 543 / NRRL Y-12651) (Yeast).